The following is a 490-amino-acid chain: Betaine aldehyde dehydrogenase (490 aa).

T26, I27, and D93 together coordinate K(+). Position 150–152 (150–152 (GAW)) interacts with NAD(+). Catalysis depends on K162, which acts as the Charge relay system. 176-179 (KPSE) contributes to the NAD(+) binding site. Residue V180 participates in K(+) binding. An NAD(+)-binding site is contributed by 230-233 (GVAS). L246 contacts K(+). The active-site Proton acceptor is E252. 3 residues coordinate NAD(+): G254, C286, and E387. The Nucleophile role is filled by C286. C286 is modified (cysteine sulfenic acid (-SOH)). The K(+) site is built by K457 and G460. E464 (charge relay system) is an active-site residue.

Belongs to the aldehyde dehydrogenase family. In terms of assembly, dimer of dimers. The cofactor is K(+).

The catalysed reaction is betaine aldehyde + NAD(+) + H2O = glycine betaine + NADH + 2 H(+). Its pathway is amine and polyamine biosynthesis; betaine biosynthesis via choline pathway; betaine from betaine aldehyde: step 1/1. In terms of biological role, involved in the biosynthesis of the osmoprotectant glycine betaine. Catalyzes the irreversible oxidation of betaine aldehyde to the corresponding acid. This Escherichia coli O157:H7 protein is Betaine aldehyde dehydrogenase.